Here is a 248-residue protein sequence, read N- to C-terminus: Protein PIMREG (248 aa).

The segment covering 1 to 10 (MASRWQNMGT) has biased composition (polar residues). The disordered stretch occupies residues 1–32 (MASRWQNMGTSVRRRSLQHQEQLEDSKELQPV). A phosphoserine mark is found at S11 and S16. Short sequence motifs (D-box) lie at residues 14–17 (RRSL) and 53–56 (RLPL). The disordered stretch occupies residues 117–205 (KARRRKRGAQ…PSESDSDLEP (89 aa)). S129 bears the Phosphoserine mark. S131 bears the Phosphoserine; by UHMK1; in vitro mark. Composition is skewed to polar residues over residues 132–143 (PTHSLSQKSTRL) and 186–198 (PYSS…SPSE). 2 positions are modified to phosphoserine: S199 and S201.

As to quaternary structure, isoform 1 and isoform 2 interact with PICALM; this interaction may target PICALM to the nucleus. During mitosis, associates with HDAC2 and MTA2 subunits of the chromatin-remodeling NuRD complex; this association is strongest at prometaphase and decreases as the cell progresses through metaphase and anaphase. Ubiquitinated by the anaphase-promoting complex/cyclosome (APC/C) complex in the presence of FZR1, leading to its degradation by the proteasome during mitotic exit. However, degradation is not essential for normal mitotic progression within a single cell cycle. In terms of tissue distribution, expressed in thymus (at protein level). Detected in spleen, colon, ovary and small intestines.

Its subcellular location is the nucleus. It localises to the nucleolus. During mitosis, may play a role in the control of metaphase-to-anaphase transition. The chain is Protein PIMREG from Homo sapiens (Human).